Reading from the N-terminus, the 208-residue chain is Truncated thymidylate kinase (208 aa).

It belongs to the thymidylate kinase family.

Catalyzes the conversion of dTMP to dTDP. The sequence is that of Truncated thymidylate kinase (TMK) from Ornithodoros (relapsing fever ticks).